The primary structure comprises 190 residues: MEKLQNRILQEGHALSETVLKVDSFLNHQVDPDLMYEIGTYFKNYFKEHKITKVFTIESSGIAPAVMTAMQMNLPMVILKKQASKILNGDVYQTTVHSFTKGLDYELTLSKKYIAKEDNILIIDDFLANGEAALGAARLVKEAGAKVAGMGIVIEKSFQPGRKMLEDKGYDVYSLARIAKLQKGLIEFVK.

Residues leucine 20 and asparagine 27 each coordinate xanthine. 5-phospho-alpha-D-ribose 1-diphosphate is bound at residue 128–132; it reads ANGEA. Xanthine is bound at residue lysine 156.

Belongs to the purine/pyrimidine phosphoribosyltransferase family. Xpt subfamily. In terms of assembly, homodimer.

The protein resides in the cytoplasm. It carries out the reaction XMP + diphosphate = xanthine + 5-phospho-alpha-D-ribose 1-diphosphate. It participates in purine metabolism; XMP biosynthesis via salvage pathway; XMP from xanthine: step 1/1. Its function is as follows. Converts the preformed base xanthine, a product of nucleic acid breakdown, to xanthosine 5'-monophosphate (XMP), so it can be reused for RNA or DNA synthesis. This chain is Xanthine phosphoribosyltransferase 1, found in Clostridium botulinum (strain ATCC 19397 / Type A).